The sequence spans 145 residues: Ornithine decarboxylase antizyme (145 aa).

This sequence belongs to the ODC antizyme family. As to quaternary structure, interacts with ODC1 and thereby sterically blocks ODC homodimerization.

Functionally, ornithine decarboxylase (ODC) antizyme protein that negatively regulates ODC activity and intracellular polyamine biosynthesis and uptake in response to increased intracellular polyamine levels. Binds to ODC monomers, inhibiting the assembly of the functional ODC homodimer, and targets the monomers for ubiquitin-independent proteolytic destruction by the 26S proteasome. The sequence is that of Ornithine decarboxylase antizyme from Onchocerca volvulus.